The following is a 144-amino-acid chain: UPF0225 protein RSc0270 (144 aa).

The protein belongs to the UPF0225 family.

The chain is UPF0225 protein RSc0270 from Ralstonia nicotianae (strain ATCC BAA-1114 / GMI1000) (Ralstonia solanacearum).